A 301-amino-acid chain; its full sequence is UDP-3-O-acyl-N-acetylglucosamine deacetylase (301 aa).

Histidine 81, histidine 237, and aspartate 241 together coordinate Zn(2+). The active-site Proton donor is histidine 264.

The protein belongs to the LpxC family. It depends on Zn(2+) as a cofactor.

It catalyses the reaction a UDP-3-O-[(3R)-3-hydroxyacyl]-N-acetyl-alpha-D-glucosamine + H2O = a UDP-3-O-[(3R)-3-hydroxyacyl]-alpha-D-glucosamine + acetate. The protein operates within glycolipid biosynthesis; lipid IV(A) biosynthesis; lipid IV(A) from (3R)-3-hydroxytetradecanoyl-[acyl-carrier-protein] and UDP-N-acetyl-alpha-D-glucosamine: step 2/6. Functionally, catalyzes the hydrolysis of UDP-3-O-myristoyl-N-acetylglucosamine to form UDP-3-O-myristoylglucosamine and acetate, the committed step in lipid A biosynthesis. This chain is UDP-3-O-acyl-N-acetylglucosamine deacetylase, found in Leptospira interrogans serogroup Icterohaemorrhagiae serovar copenhageni (strain Fiocruz L1-130).